A 688-amino-acid chain; its full sequence is Glycine--tRNA ligase beta subunit (688 aa).

This sequence belongs to the class-II aminoacyl-tRNA synthetase family. In terms of assembly, tetramer of two alpha and two beta subunits.

It localises to the cytoplasm. The enzyme catalyses tRNA(Gly) + glycine + ATP = glycyl-tRNA(Gly) + AMP + diphosphate. This is Glycine--tRNA ligase beta subunit from Colwellia psychrerythraea (strain 34H / ATCC BAA-681) (Vibrio psychroerythus).